Here is an 886-residue protein sequence, read N- to C-terminus: Extended synaptotagmin-3 (886 aa).

Residues 1-21 (MRAEEPCAPGAPSALGAQRTP) form a disordered region. Residues 1–29 (MRAEEPCAPGAPSALGAQRTPGPELRLSS) lie on the Cytoplasmic side of the membrane. Helical transmembrane passes span 30–50 (QLLPELCTFVVRVLFYLGPVY) and 51–71 (LAGYLGLSITWLLLGALLWMW). Topologically, residues 72–886 (WRRNRRGKLG…ELTPNGQPRS (815 aa)) are cytoplasmic. In terms of domain architecture, SMP-LTD spans 114 to 291 (DVERVEWANK…LPNRVTVPVK (178 aa)). C2 domains lie at 291–408 (KKGL…DEWF) and 426–566 (SLLT…QLDH). The Ca(2+) site is built by K321, D322, D332, D379, E380, D381, D383, D385, and D386. Residues 613–673 (QGPKAQPQEE…PEPKGKDSAK (61 aa)) are disordered. Positions 642 to 659 (RSTTTTTSATTVATEPTS) are enriched in low complexity. Positions 664-673 (PEPKGKDSAK) are enriched in basic and acidic residues. In terms of domain architecture, C2 3 spans 754-876 (QLGEIQLTVR…DLIKGFSQWY (123 aa)). Residues 801 to 808 (RKWACRKK) form a required for phosphatidylinositol 4,5-bisphosphate-dependent location at the cell membrane region.

It belongs to the extended synaptotagmin family. In terms of assembly, interacts with ESYT1 and ESYT2. Widely expressed with high level in cerebellum and skin.

The protein localises to the cell membrane. It is found in the endoplasmic reticulum membrane. Functionally, binds glycerophospholipids in a barrel-like domain and may play a role in cellular lipid transport. Tethers the endoplasmic reticulum to the cell membrane and promotes the formation of appositions between the endoplasmic reticulum and the cell membrane. The protein is Extended synaptotagmin-3 of Homo sapiens (Human).